The chain runs to 1343 residues: uncharacterized protein (1343 aa).

The helical transmembrane segment at 432-449 threads the bilayer; the sequence is LYVYFVTTKTGVVAFSLL.

This sequence belongs to the IIV-6 295L family.

It localises to the membrane. This is an uncharacterized protein from Acheta domesticus (House cricket).